A 649-amino-acid polypeptide reads, in one-letter code: MSQYAAELCKLLITDNFGELYAPLPRIVQNTRLSPRQVRHGLAVLIQQRLIYHYTSLDDGIAYYEASWMTAYNLVRSGRILQLVEEKLGKYVAKVLSTILYHGHVRISYLETLPELRPQVSSKAGKLVAANGLNGIHSDEEEEEEDAHVTDQGEQEEYASGRPENSVDSDYGKRSASQLHPALRSLAAYGYIMRVRDAHFQSPADLVEDAERAVSSRSDVRGLKGKKFQEAIDAGVETYIKEKTDGTIPQGPLAGALPRGIKRRAGQLATNSSSKRVKLEHLPEGDEDIDDDDFYGDDYVDGDNTLMDPNMIISVNYQKFEVALRNRRLARLAEQCTSRVTSQVYEALLGRIELKTPACRKQPERVPEGEENEQYSVAIPLHTILDDIDPDLDLSESMAGVDPANLLSNGHMGLNGDGNGDDDDDESTGASTGIWNRRRNRVYELEQHLSLLAQEPNIFSTRSMQSGMITWAVEFRHLARRLRHLEIERIIESRFGTIAVRVIRVLAAKGKLDEKRLQEISLMASKELRQVLARMEAAGFVDLQEVPRDAQRQPSRTMYLWFFDLDRVARMVLEDTYKCMSRCLQRIGVERNKLKLFLEKTERTDVKGNEEKYLSPAELKTLKEWRDKEALLLGEVGRLDELVSVLRDY.

3 disordered regions span residues 135–176 (GIHS…KRSA), 266–293 (GQLA…DDDD), and 409–432 (NGHM…GAST). A leucine-zipper region spans residues 576 to 597 (TYKCMSRCLQRIGVERNKLKLF).

Belongs to the RNA polymerase beta chain family. As to quaternary structure, component of the RNA polymerase III (Pol III) complex consisting of 17 subunits.

Its subcellular location is the nucleus. Functionally, DNA-dependent RNA polymerase catalyzes the transcription of DNA into RNA using the four ribonucleoside triphosphates as substrates. Specific core component of RNA polymerase III which synthesizes small RNAs, such as 5S rRNA and tRNAs. The sequence is that of DNA-directed RNA polymerase III subunit rpc3 (RPC82) from Ajellomyces capsulatus (strain NAm1 / WU24) (Darling's disease fungus).